Consider the following 336-residue polypeptide: Ferredoxin--NADP reductase (336 aa).

Thr18, Glu37, Gln45, Tyr50, Val92, Phe127, Asp290, and Ser331 together coordinate FAD.

Belongs to the ferredoxin--NADP reductase type 2 family. In terms of assembly, homodimer. FAD serves as cofactor.

It catalyses the reaction 2 reduced [2Fe-2S]-[ferredoxin] + NADP(+) + H(+) = 2 oxidized [2Fe-2S]-[ferredoxin] + NADPH. The protein is Ferredoxin--NADP reductase of Symbiobacterium thermophilum (strain DSM 24528 / JCM 14929 / IAM 14863 / T).